A 101-amino-acid polypeptide reads, in one-letter code: Acylphosphatase-1 (101 aa).

N-acetylserine is present on serine 2. Position 2 is an N-acetylalanine (serine 2). Positions 11-101 (SVDYEIFGKV…LDYTDFQIVK (91 aa)) constitute an Acylphosphatase-like domain. Active-site residues include arginine 26 and asparagine 44.

Belongs to the acylphosphatase family. Organ-common type isozyme is found in many different tissues.

The catalysed reaction is an acyl phosphate + H2O = a carboxylate + phosphate + H(+). The protein is Acylphosphatase-1 (ACYP1) of Bos taurus (Bovine).